The following is a 223-amino-acid chain: Ribose-5-phosphate isomerase A (223 aa).

Residues Thr-29–Thr-32, Asp-82–Asp-85, and Lys-95–Gly-98 contribute to the substrate site. The Proton acceptor role is filled by Glu-104. Position 122 (Lys-122) interacts with substrate.

The protein belongs to the ribose 5-phosphate isomerase family. As to quaternary structure, homodimer.

It carries out the reaction aldehydo-D-ribose 5-phosphate = D-ribulose 5-phosphate. It participates in carbohydrate degradation; pentose phosphate pathway; D-ribose 5-phosphate from D-ribulose 5-phosphate (non-oxidative stage): step 1/1. In terms of biological role, catalyzes the reversible conversion of ribose-5-phosphate to ribulose 5-phosphate. The chain is Ribose-5-phosphate isomerase A from Neisseria gonorrhoeae (strain ATCC 700825 / FA 1090).